A 193-amino-acid chain; its full sequence is Large ribosomal subunit protein eL19B (193 aa).

Residues 157 to 179 (EQQDARRARAKAARQRRAKAVEE) form a disordered region. Residues 164–174 (ARAKAARQRRA) are compositionally biased toward basic residues.

Belongs to the eukaryotic ribosomal protein eL19 family. As to quaternary structure, component of the large ribosomal subunit (LSU). Mature yeast ribosomes consist of a small (40S) and a large (60S) subunit. The 40S small subunit contains 1 molecule of ribosomal RNA (18S rRNA) and at least 33 different proteins. The large 60S subunit contains 3 rRNA molecules (25S, 5.8S and 5S rRNA) and at least 46 different proteins. eL19 lies in close proximity to the binding site for eukaryotic initiation factor eIF4G.

It is found in the cytoplasm. Its function is as follows. Component of the ribosome, a large ribonucleoprotein complex responsible for the synthesis of proteins in the cell. The small ribosomal subunit (SSU) binds messenger RNAs (mRNAs) and translates the encoded message by selecting cognate aminoacyl-transfer RNA (tRNA) molecules. The large subunit (LSU) contains the ribosomal catalytic site termed the peptidyl transferase center (PTC), which catalyzes the formation of peptide bonds, thereby polymerizing the amino acids delivered by tRNAs into a polypeptide chain. The nascent polypeptides leave the ribosome through a tunnel in the LSU and interact with protein factors that function in enzymatic processing, targeting, and the membrane insertion of nascent chains at the exit of the ribosomal tunnel. eL19 may play a role in the last stages of translation initiation, in particular subunit joining and shedding/releasing factors. The chain is Large ribosomal subunit protein eL19B (rpl1902) from Schizosaccharomyces pombe (strain 972 / ATCC 24843) (Fission yeast).